The following is a 156-amino-acid chain: Small ribosomal subunit protein uS7 (156 aa).

The protein belongs to the universal ribosomal protein uS7 family. In terms of assembly, part of the 30S ribosomal subunit. Contacts proteins S9 and S11.

Functionally, one of the primary rRNA binding proteins, it binds directly to 16S rRNA where it nucleates assembly of the head domain of the 30S subunit. Is located at the subunit interface close to the decoding center, probably blocks exit of the E-site tRNA. In Bartonella henselae (strain ATCC 49882 / DSM 28221 / CCUG 30454 / Houston 1) (Rochalimaea henselae), this protein is Small ribosomal subunit protein uS7.